We begin with the raw amino-acid sequence, 312 residues long: uncharacterized protein (312 aa).

6 helical membrane-spanning segments follow: residues 9-29, 115-135, 187-207, 224-244, 264-284, and 292-312; these read LTLT…GLFI, LATL…IGFI, ITIA…DYIT, ITVA…AGEF, ILSS…IYGF, and MIST…TLIL.

It localises to the cell membrane. This is an uncharacterized protein from Methanocaldococcus jannaschii (strain ATCC 43067 / DSM 2661 / JAL-1 / JCM 10045 / NBRC 100440) (Methanococcus jannaschii).